Here is a 62-residue protein sequence, read N- to C-terminus: ATP synthase subunit K, mitochondrial (62 aa).

A helical membrane pass occupies residues 14-30; it reads HHLAIATIGTVVALVAP.

As to quaternary structure, F-type ATP synthases have 2 components, the catalytic core F(1) and the membrane-embedded component F(0), linked together by a central stalk and a peripheral stalk. The central stalk, also called rotor shaft, is often seen as part of F(1). The peripheral stalk is seen as part of F(0). F(0) contains the membrane channel next to the rotor. F-type ATP synthases form dimers but each monomer functions independently in ATP generation. The dimer consists of 18 different polypeptides: ATP1 (subunit alpha, part of F(1), 3 molecules per monomer), ATP2 (subunit beta, part of F(1), 3 molecules per monomer), ATP3 (subunit gamma, part of the central stalk), ATP4 (subunit b, part of the peripheral stalk), ATP5/OSCP (subunit 5/OSCP, part of the peripheral stalk), ATP6 (subunit a, part of the peripheral stalk), ATP7 (subunit d, part of the peripheral stalk), ATP8 (subunit 8, part of the peripheral stalk), OLI1 (subunit c, part of the rotor, 10 molecules per monomer), ATP14 (subunit h, part of the peripheral stalk), ATP15 (subunit epsilon, part of the central stalk), ATP16 (subunit delta, part of the central stalk), ATP17 (subunit f, part of the peripheral stalk), ATP18 (subunit i/j, part of the peripheral stalk). Dimer-specific subunits are ATP19 (subunit k, at interface between monomers), ATP20 (subunit g, at interface between monomers), TIM11 (subunit e, at interface between monomers). Also contains subunit L.

The protein localises to the mitochondrion inner membrane. In terms of biological role, mitochondrial membrane ATP synthase (F(1)F(0) ATP synthase or Complex V) produces ATP from ADP in the presence of a proton gradient across the membrane which is generated by electron transport complexes of the respiratory chain. F-type ATP synthases consist of two structural domains, F(1) - containing the extramembraneous catalytic core, and F(0) - containing the membrane proton channel, linked together by a central stalk and a peripheral stalk. During catalysis, ATP synthesis in the catalytic domain of F(1) is coupled via a rotary mechanism of the central stalk subunits to proton translocation. Part of the complex F(0) domain. Minor subunit located with subunit a/ATP6 in the membrane. The K chain binds the dimeric form by interacting with the G and E chains. In Pichia angusta (Yeast), this protein is ATP synthase subunit K, mitochondrial.